The chain runs to 498 residues: ATP synthase subunit beta, chloroplastic (498 aa).

ATP is bound at residue 172–179; sequence GGAGVGKT.

Belongs to the ATPase alpha/beta chains family. As to quaternary structure, F-type ATPases have 2 components, CF(1) - the catalytic core - and CF(0) - the membrane proton channel. CF(1) has five subunits: alpha(3), beta(3), gamma(1), delta(1), epsilon(1). CF(0) has four main subunits: a(1), b(1), b'(1) and c(9-12).

Its subcellular location is the plastid. The protein resides in the chloroplast thylakoid membrane. It catalyses the reaction ATP + H2O + 4 H(+)(in) = ADP + phosphate + 5 H(+)(out). Produces ATP from ADP in the presence of a proton gradient across the membrane. The catalytic sites are hosted primarily by the beta subunits. The sequence is that of ATP synthase subunit beta, chloroplastic from Nymphaea alba (White water-lily).